The primary structure comprises 123 residues: Intracellular iron chaperone frataxin (123 aa).

As to quaternary structure, homodimer, upon Fe(2+) binding. Interacts with the SufS/SufU complex. Interacts with CpfC. Fe(2+) serves as cofactor.

The protein resides in the cytoplasm. Its function is as follows. Plays an essential role in iron intracellular trafficking to iron cofactor biogenesis systems including iron-sulfur cluster (Fe-S) or heme assembly. Promotes the biosynthesis of iron-sulfur clusters by delivering Fe to the complex composed of the cysteine desulfurase SufS and the zinc-dependent sulfurtransferase SufU. Also plays a critical role in coproporphyrin-dependent heme b biogenesis and thus provides an essential function for the bacterial global metabolism. The sequence is that of Intracellular iron chaperone frataxin (fra) from Bacillus subtilis (strain 168).